The sequence spans 347 residues: MLVLGIESSCDETGVALVDAGGSEVPRLLSHALFSQIQMHQAYGGVVPELASRDHIRRVLPLTRQVMAQAGRSLAQVDVVAYTRGPGLAGALLVGAGVACALAAALGKPVMGVHHLEGHLLSPFLSADPPVFPFVALLVSGGHTQLMRVDRVGSYELLGETIDDAAGEAFDKSAKLMGLPYPGGPHLADLARQGDGTAFKLPRPLLHSGDLDFSFAGLKTAVLTQAKKLGPELENRKADLAAATQAAIVDVLVKKSLAAMAQTGLKRLVVAGGVGANALLRSQLNAACQQRGIRVHYPELHLCTDNGAMIALAAGMRLQAGLETLQRGYTFDVKPRWSLTPTVARSA.

The Fe cation site is built by His115 and His119. Substrate-binding positions include 138-142 (LVSGG), Asp171, Gly184, and Asn277. Asp305 lines the Fe cation pocket.

This sequence belongs to the KAE1 / TsaD family. Requires Fe(2+) as cofactor.

The protein localises to the cytoplasm. The catalysed reaction is L-threonylcarbamoyladenylate + adenosine(37) in tRNA = N(6)-L-threonylcarbamoyladenosine(37) in tRNA + AMP + H(+). Functionally, required for the formation of a threonylcarbamoyl group on adenosine at position 37 (t(6)A37) in tRNAs that read codons beginning with adenine. Is involved in the transfer of the threonylcarbamoyl moiety of threonylcarbamoyl-AMP (TC-AMP) to the N6 group of A37, together with TsaE and TsaB. TsaD likely plays a direct catalytic role in this reaction. The polypeptide is tRNA N6-adenosine threonylcarbamoyltransferase (Polaromonas sp. (strain JS666 / ATCC BAA-500)).